Consider the following 78-residue polypeptide: Small ribosomal subunit protein bS18 (78 aa).

It belongs to the bacterial ribosomal protein bS18 family. As to quaternary structure, part of the 30S ribosomal subunit. Forms a tight heterodimer with protein bS6.

Binds as a heterodimer with protein bS6 to the central domain of the 16S rRNA, where it helps stabilize the platform of the 30S subunit. The sequence is that of Small ribosomal subunit protein bS18 from Rhodospirillum rubrum (strain ATCC 11170 / ATH 1.1.1 / DSM 467 / LMG 4362 / NCIMB 8255 / S1).